Reading from the N-terminus, the 198-residue chain is FMN-dependent NADH:quinone oxidoreductase (198 aa).

FMN-binding positions include S10, 16 to 18, 94 to 97, and 138 to 141; these read SQS, MYNF, and TRGG.

This sequence belongs to the azoreductase type 1 family. In terms of assembly, homodimer. FMN serves as cofactor.

It catalyses the reaction 2 a quinone + NADH + H(+) = 2 a 1,4-benzosemiquinone + NAD(+). It carries out the reaction N,N-dimethyl-1,4-phenylenediamine + anthranilate + 2 NAD(+) = 2-(4-dimethylaminophenyl)diazenylbenzoate + 2 NADH + 2 H(+). In terms of biological role, quinone reductase that provides resistance to thiol-specific stress caused by electrophilic quinones. Also exhibits azoreductase activity. Catalyzes the reductive cleavage of the azo bond in aromatic azo compounds to the corresponding amines. This chain is FMN-dependent NADH:quinone oxidoreductase, found in Shewanella putrefaciens (strain CN-32 / ATCC BAA-453).